The following is a 323-amino-acid chain: Ankyrin repeat and SOCS box protein 11 (323 aa).

ANK repeat units lie at residues 64–93 (ADRSPLHEAAAQGRLLALKTLIAQGINVNL), 97–126 (NRVSSLHEACLGGHVACAKALLENGAHVNA), 130–159 (HGATPLFNACCSGSAACVNVLLEFGAKAQL), 162–191 (YLASPIHEAVKRGHRECMEILLTKDVNIEQ), 195–224 (QLGTPLYVACTYQRVDCVKKLLELGASVDH), 227–256 (WLDTPLHAAVRQSSVEVINLLTVYGANLNL), and 260–289 (QGKSALDLAVPKSSVRQALLLHEGPPALSQ). One can recognise an SOCS box domain in the interval 273 to 323 (SVRQALLLHEGPPALSQLCRLCVRKCLGRTCHHAIYALGLPESLEKFLLYQ).

This sequence belongs to the ankyrin SOCS box (ASB) family. As to quaternary structure, substrate-recognition component of the ECS(ASB11) complex, composed of ASB11, CUL5, ELOB, ELOC and RNF7/RBX2.

It is found in the endoplasmic reticulum. It functions in the pathway protein modification; protein ubiquitination. Substrate-recognition component of a cullin-5-RING E3 ubiquitin-protein ligase complex (ECS complex, also named CRL5 complex), which mediates the ubiquitination and subsequent proteasomal degradation of target proteins, such as BIK, DIRAS2 and RPN1. The ECS(ASB11) complex acts as a regulator of the endoplasmic reticulum unfolded protein response by mediating ubiquitination and degradation of BIK. The chain is Ankyrin repeat and SOCS box protein 11 (Asb11) from Mus musculus (Mouse).